Here is an 89-residue protein sequence, read N- to C-terminus: Small ribosomal subunit protein uS15 (89 aa).

It belongs to the universal ribosomal protein uS15 family. In terms of assembly, part of the 30S ribosomal subunit. Forms a bridge to the 50S subunit in the 70S ribosome, contacting the 23S rRNA.

Functionally, one of the primary rRNA binding proteins, it binds directly to 16S rRNA where it helps nucleate assembly of the platform of the 30S subunit by binding and bridging several RNA helices of the 16S rRNA. Forms an intersubunit bridge (bridge B4) with the 23S rRNA of the 50S subunit in the ribosome. This chain is Small ribosomal subunit protein uS15, found in Yersinia pseudotuberculosis serotype O:1b (strain IP 31758).